A 356-amino-acid polypeptide reads, in one-letter code: CX3C chemokine receptor 1 (356 aa).

Topologically, residues 1 to 26 are extracellular; the sequence is MTTLYSDWATESFEYDESSEACFIGD. Residues 27-47 form a helical membrane-spanning segment; that stretch reads IVAFGTIFLSIFYSLVFAFGL. At 48–68 the chain is on the cytoplasmic side; sequence VGNLLVVCALTSSRKPKSITD. The chain crosses the membrane as a helical span at residues 69–89; that stretch reads IYLLNLALSDLLFVATLPFWT. The Extracellular segment spans residues 90–105; sequence HYVISEQGFHNAVCKL. Cysteines 103 and 176 form a disulfide. Residues 106 to 126 form a helical membrane-spanning segment; sequence TTALFFIGFFGGIFFITVISI. Residues 127-147 lie on the Cytoplasmic side of the membrane; it reads DRYMAIVLAANSINNRTVQHG. A helical membrane pass occupies residues 148-168; that stretch reads VTTSLGVWAAAILVAAPQFMF. At 169-195 the chain is on the extracellular side; the sequence is TKQKGNECLGDYPEVLQDIWPVLRNTE. The chain crosses the membrane as a helical span at residues 196–216; sequence ANFLGFLLPVLIMSYCYFRII. Topologically, residues 217–232 are cytoplasmic; the sequence is QTLFSCKNHKKAKAIK. A helical transmembrane segment spans residues 233-253; that stretch reads LILLVVIVFFLFWTPYNVMIF. The Extracellular segment spans residues 254-277; sequence LETLKLYGFFPNCDMKRDLRLALS. A helical transmembrane segment spans residues 278–298; that stretch reads VTETVAFSHCCLNPLIYAFAG. The Cytoplasmic segment spans residues 299 to 356; that stretch reads QKFRRYLRHLSRKCQAVLCGRPVHVSFSPSESQRSRQESIVSSNFTHYTSDGDASLLL. T347 carries the phosphothreonine modification.

It belongs to the G-protein coupled receptor 1 family. In terms of assembly, found in a ternary complex with CX3CL1 and ITGAV:ITGB3 or ITGA4:ITGB1. This protein is not N-glycosylated which is unusual for G-protein-coupled receptors.

It is found in the cell membrane. Functionally, receptor for the C-X3-C chemokine fractalkine (CX3CL1) present on many early leukocyte cells; CX3CR1-CX3CL1 signaling exerts distinct functions in different tissue compartments, such as immune response, inflammation, cell adhesion and chemotaxis. CX3CR1-CX3CL1 signaling mediates cell migratory functions. Responsible for the recruitment of natural killer (NK) cells to inflamed tissues. Acts as a regulator of inflammation process leading to atherogenesis by mediating macrophage and monocyte recruitment to inflamed atherosclerotic plaques, promoting cell survival. Involved in airway inflammation by promoting interleukin 2-producing T helper (Th2) cell survival in inflamed lung. Involved in the migration of circulating monocytes to non-inflamed tissues, where they differentiate into macrophages and dendritic cells. Acts as a negative regulator of angiogenesis, probably by promoting macrophage chemotaxis. Plays a key role in brain microglia by regulating inflammatory response in the central nervous system (CNS) and regulating synapse maturation. Required to restrain the microglial inflammatory response in the CNS and the resulting parenchymal damage in response to pathological stimuli. Involved in brain development by participating in synaptic pruning, a natural process during which brain microglia eliminates extra synapses during postnatal development. Synaptic pruning by microglia is required to promote the maturation of circuit connectivity during brain development. Acts as an important regulator of the gut microbiota by controlling immunity to intestinal bacteria and fungi. Expressed in lamina propria dendritic cells in the small intestine, which form transepithelial dendrites capable of taking up bacteria in order to provide defense against pathogenic bacteria. Required to initiate innate and adaptive immune responses against dissemination of commensal fungi (mycobiota) component of the gut: expressed in mononuclear phagocytes (MNPs) and acts by promoting induction of antifungal IgG antibodies response to confer protection against disseminated C.albicans or C.auris infection. Also acts as a receptor for C-C motif chemokine CCL26, inducing cell chemotaxis. In Oryctolagus cuniculus (Rabbit), this protein is CX3C chemokine receptor 1.